The following is a 341-amino-acid chain: MIISYKCPNCGSDMAFDSETGSLSCSSCGRQDNIESLPKENIAARFSDDEAKEYQCKNCGAVLITEAETTATTCSFCGGAAILADRLSGHLAPAKVIPFTISKQEAEQAFRKWCKKGLLTPRGFMSADRIKSITGMYIPFWMFDLNSEVQVRANCTRVHQYEEGDYICTETEHFEAFRDINLDYLKIPVDASEKMKDELMDKLEPYSYEELKDFQTAYLAGYIAEKYNYTDEELFPRAKEKISSYIDSYIHSTFSGYTSVNVRDKHIHTKNVNSFYVLLPVWMVSYDYERAEHIFAMNGQTGKVVGKPPISRGKVAAWFSGIAGGTFLALKLVSLMMGGGF.

The chain crosses the membrane as a helical span at residues 315-337 (VAAWFSGIAGGTFLALKLVSLMM).

Its subcellular location is the cell membrane. This is an uncharacterized protein from Bacillus subtilis (strain 168).